A 610-amino-acid chain; its full sequence is E-selectin (610 aa).

The signal sequence occupies residues 1-21 (MIASQFLSALTLVLLIKESGA). The region spanning 22–138 (WSYSASTTNM…CNKKKLALCY (117 aa)) is the C-type lectin domain. Residues 22-555 (WSYSASTTNM…CEATAKSNIP (534 aa)) lie on the Extracellular side of the membrane. N-linked (GlcNAc...) asparagine glycosylation is present at Asn-30. 19 disulfide bridges follow: Cys-40-Cys-137, Cys-110-Cys-129, Cys-142-Cys-153, Cys-147-Cys-162, Cys-164-Cys-173, Cys-179-Cys-223, Cys-192-Cys-205, Cys-209-Cys-236, Cys-241-Cys-285, Cys-254-Cys-267, Cys-271-Cys-298, Cys-303-Cys-348, Cys-334-Cys-361, Cys-366-Cys-411, Cys-397-Cys-424, Cys-429-Cys-474, Cys-460-Cys-487, Cys-492-Cys-533, and Cys-519-Cys-546. Ca(2+) is bound by residues Glu-101, Asn-103, and Glu-108. Residues 101-108 (EPNNKQNE), 112-117 (EIYIKR), and 125-127 (NDE) contribute to the a carbohydrate site. Ca(2+) is bound by residues Asn-125 and Asp-126. In terms of domain architecture, EGF-like spans 139–174 (TAACTHTSCSGHGECVETINNYTCQCHPGFTGLRCE). Asn-159 is a glycosylation site (N-linked (GlcNAc...) asparagine). Sushi domains are found at residues 177–238 (VTCQ…ACHV), 239–300 (VECD…TCKA), 314–363 (VNCS…VCKA), 365–426 (QCKA…TCEA), 428–489 (RCDA…SCQV), and 490–548 (VQCA…TCEA). Residues Asn-198 and Asn-202 are each glycosylated (N-linked (GlcNAc...) asparagine). An N-linked (GlcNAc...) asparagine glycan is attached at Asn-264. N-linked (GlcNAc...) asparagine glycans are attached at residues Asn-315, Asn-327, and Asn-331. N-linked (GlcNAc...) asparagine glycosylation is present at Asn-526. Residues 556-577 (LTVGLSAAGTSLLTLASFLFWL) traverse the membrane as a helical segment. Over 578–610 (LKRLRRKAKKFVPASSYQSLQSDGSYQMPSESA) the chain is Cytoplasmic.

It belongs to the selectin/LECAM family. As to quaternary structure, interacts with SELPLG/PSGL1 and PODXL2 through the sialyl Lewis X epitope. SELPLG sulfation appears not to be required for this interaction.

Its subcellular location is the cell membrane. Cell-surface glycoprotein having a role in immunoadhesion. Mediates in the adhesion of blood neutrophils in cytokine-activated endothelium through interaction with SELPLG/PSGL1. May have a role in capillary morphogenesis. This Equus caballus (Horse) protein is E-selectin (SELE).